The chain runs to 433 residues: Ligand-dependent corepressor (433 aa).

The disordered stretch occupies residues 1–51 (MQRMIQQFAAEYTSKNSSTQDPSQPNSTKNQSLPKASPVTTSPTAATTQNP). Polar residues predominate over residues 13–34 (TSKNSSTQDPSQPNSTKNQSLP). Residues 36–48 (ASPVTTSPTAATT) show a composition bias toward low complexity. S42 bears the Phosphoserine mark. The short motif at 53 to 57 (LSKLL) is the Interaction with nuclear receptors element. At S63 the chain carries Phosphoserine. The disordered stretch occupies residues 64 to 147 (PLDLTVRKSQ…GTREGFGHST (84 aa)). Over residues 93 to 110 (AGSTSLSHSPGCSSTQGN) the composition is skewed to polar residues. S249 is modified (phosphoserine). K254 participates in a covalent cross-link: Glycyl lysine isopeptide (Lys-Gly) (interchain with G-Cter in SUMO2). Residues 299–348 (QSRKSMLDAGPDSWGSDAEQSTSGQPYPTSDQEGDPGSKQPRKKRGRYRQ) are disordered. Positions 316 to 329 (AEQSTSGQPYPTSD) are enriched in polar residues. The short motif at 339-345 (PRKKRGR) is the Nuclear localization signal element. The HTH psq-type domain maps to 340–392 (RKKRGRYRQYNSEILEEAISVVMSGKMSVSKAQSIYGIPHSTLEYKVKERLGT). Residue R345 forms a Glycyl lysine isopeptide (Lys-Gly) (interchain with G-Cter in SUMO2) linkage. The segment at residues 368-388 (VSKAQSIYGIPHSTLEYKVKE) is a DNA-binding region (H-T-H motif). Residue G391 forms a Glycyl lysine isopeptide (Lys-Gly) (interchain with G-Cter in SUMO2) linkage. The tract at residues 393–412 (LKNPPKKKMKLMRSEGPDVS) is disordered. K414 is covalently cross-linked (Glycyl lysine isopeptide (Lys-Gly) (interchain with G-Cter in SUMO2)).

As to quaternary structure, interacts with ESR1 and ESR2 in the presence of estradiol. Interacts with CTBP1, HDAC3 and HDAC6. Component of a large corepressor complex that contains about 20 proteins, including CTBP1, CTBP2, HDAC1 and HDAC2. As to expression, ubiquitous.

The protein resides in the nucleus. Functionally, may act as transcription activator that binds DNA elements with the sequence 5'-CCCTATCGATCGATCTCTACCT-3'. Repressor of ligand-dependent transcription activation by target nuclear receptors. Repressor of ligand-dependent transcription activation by ESR1, ESR2, NR3C1, PGR, RARA, RARB, RARG, RXRA and VDR. The protein is Ligand-dependent corepressor of Homo sapiens (Human).